The chain runs to 51 residues: UPF0181 protein VV2_0310 (51 aa).

This sequence belongs to the UPF0181 family.

The protein is UPF0181 protein VV2_0310 of Vibrio vulnificus (strain CMCP6).